The following is a 263-amino-acid chain: Putative S-adenosyl-L-methionine-dependent methyltransferase Mkms_0098 (263 aa).

S-adenosyl-L-methionine is bound by residues Asp-121 and 150–151 (ES).

The protein belongs to the UPF0677 family.

Exhibits S-adenosyl-L-methionine-dependent methyltransferase activity. This is Putative S-adenosyl-L-methionine-dependent methyltransferase Mkms_0098 from Mycobacterium sp. (strain KMS).